A 240-amino-acid polypeptide reads, in one-letter code: 4-hydroxy-tetrahydrodipicolinate reductase (240 aa).

NAD(+) is bound by residues 79–81 and 103–106; these read ATT and SANM. Residue histidine 135 is the Proton donor/acceptor of the active site. Histidine 136 serves as a coordination point for (S)-2,3,4,5-tetrahydrodipicolinate. The Proton donor role is filled by lysine 139. 145-146 lines the (S)-2,3,4,5-tetrahydrodipicolinate pocket; it reads GT.

This sequence belongs to the DapB family.

It localises to the cytoplasm. It catalyses the reaction (S)-2,3,4,5-tetrahydrodipicolinate + NAD(+) + H2O = (2S,4S)-4-hydroxy-2,3,4,5-tetrahydrodipicolinate + NADH + H(+). It carries out the reaction (S)-2,3,4,5-tetrahydrodipicolinate + NADP(+) + H2O = (2S,4S)-4-hydroxy-2,3,4,5-tetrahydrodipicolinate + NADPH + H(+). The protein operates within amino-acid biosynthesis; L-lysine biosynthesis via DAP pathway; (S)-tetrahydrodipicolinate from L-aspartate: step 4/4. Its function is as follows. Catalyzes the conversion of 4-hydroxy-tetrahydrodipicolinate (HTPA) to tetrahydrodipicolinate. This is 4-hydroxy-tetrahydrodipicolinate reductase from Staphylococcus aureus (strain MSSA476).